Consider the following 141-residue polypeptide: Hemoglobin subunit alpha-A/A' (141 aa).

Positions V1 to R141 constitute a Globin domain. H58 is an O2 binding site. H87 lines the heme b pocket.

The protein belongs to the globin family. Heterotetramer of two alpha chains and two beta chains. As to expression, red blood cells.

Functionally, involved in oxygen transport from the lung to the various peripheral tissues. The protein is Hemoglobin subunit alpha-A/A' (HBAA) of Gyps rueppelli (Rueppell's griffon).